Consider the following 191-residue polypeptide: Rho-related GTP-binding protein RhoH (191 aa).

Residue 11 to 18 (GDSAVGKT) participates in GTP binding. Residues 33–41 (YKPTVYENT) carry the Effector region motif. GTP is bound at residue 58 to 62 (DTAGN). Positions 73–86 (YQQADVVLMCYSVA) are interaction with ZAP70. 116 to 119 (TQTD) is a GTP binding site. Cys-188 is modified (cysteine methyl ester). Residue Cys-188 is the site of S-geranylgeranyl cysteine attachment. The propeptide at 189-191 (KIL) is removed in mature form.

This sequence belongs to the small GTPase superfamily. Rho family. In terms of assembly, interacts with GDI1 and GDI2. Interacts with ZAP70 (via SH2 domains) and the interaction is enhanced by its phosphorylation by LCK. Interacts with SYK and the interaction is enhanced by its phosphorylation by FYN. Post-translationally, phosphorylated on tyrosine by LCK. Phosphorylated by FYN. Phosphorylation enhances the interactions with ZAP70 and SYK and is critical for its function in thymocyte development.

Its subcellular location is the cytoplasm. The protein resides in the cell membrane. Its function is as follows. Binds GTP but lacks intrinsic GTPase activity and is resistant to Rho-specific GTPase-activating proteins. Inhibits the activation of NF-kappa-B by TNF and IKKB and the activation of CRK/p38 by TNF. Inhibits activities of RAC1, RHOA and CDC42. Negatively regulates leukotriene production in neutrophils. Negative regulator of hematopoietic progenitor cell proliferation, survival and migration. Critical regulator of thymocyte development and T-cell antigen receptor (TCR) signaling by mediating recruitment and activation of ZAP70. Required for phosphorylation of CD3Z, membrane translocation of ZAP70 and subsequent activation of the ZAP70-mediated pathways. Essential for efficient beta-selection and positive selection by promoting the ZAP70-dependent phosphorylation of the LAT signalosome during pre-TCR and TCR signaling. Crucial for thymocyte maturation during DN3 to DN4 transition and during positive selection. Plays critical roles in mast cell function by facilitating phosphorylation of SYK in Fc epsilon RI-mediated signal transduction. Essential for the phosphorylation of LAT, LCP2, PLCG1 and PLCG2 and for Ca(2+) mobilization in mast cells. This Bos taurus (Bovine) protein is Rho-related GTP-binding protein RhoH (RHOH).